The sequence spans 298 residues: ATP phosphoribosyltransferase (298 aa).

Belongs to the ATP phosphoribosyltransferase family. Long subfamily. Mg(2+) serves as cofactor.

The protein resides in the cytoplasm. It carries out the reaction 1-(5-phospho-beta-D-ribosyl)-ATP + diphosphate = 5-phospho-alpha-D-ribose 1-diphosphate + ATP. Its pathway is amino-acid biosynthesis; L-histidine biosynthesis; L-histidine from 5-phospho-alpha-D-ribose 1-diphosphate: step 1/9. Feedback inhibited by histidine. Functionally, catalyzes the condensation of ATP and 5-phosphoribose 1-diphosphate to form N'-(5'-phosphoribosyl)-ATP (PR-ATP). Has a crucial role in the pathway because the rate of histidine biosynthesis seems to be controlled primarily by regulation of HisG enzymatic activity. The chain is ATP phosphoribosyltransferase from Vibrio parahaemolyticus serotype O3:K6 (strain RIMD 2210633).